A 354-amino-acid polypeptide reads, in one-letter code: Glutamine synthetase cytosolic isozyme 1-3 (354 aa).

S2 bears the N-acetylserine mark. Residues S2 and S48 each carry the phosphoserine modification. The GS beta-grasp domain maps to 19 to 99 (IIAEYIWIGG…VMCDAYTPAG (81 aa)). The 249-residue stretch at 106–354 (KRHNAAKIFS…SMIAETTILG (249 aa)) folds into the GS catalytic domain.

The protein belongs to the glutamine synthetase family. In terms of assembly, homooctamer. In terms of tissue distribution, expressed in the pericycle in the region of mature root.

The protein resides in the cytoplasm. The enzyme catalyses L-glutamate + NH4(+) + ATP = L-glutamine + ADP + phosphate + H(+). Functionally, low-affinity glutamine synthetase. May contribute to the homeostatic control of glutamine synthesis in roots. The protein is Glutamine synthetase cytosolic isozyme 1-3 (GLN1-3) of Arabidopsis thaliana (Mouse-ear cress).